The chain runs to 422 residues: Glutamyl-tRNA reductase (422 aa).

Residues 49-52 (TCNR), S107, 112-114 (EPQ), and Q118 contribute to the substrate site. C50 (nucleophile) is an active-site residue. Residue 187-192 (GAGETI) coordinates NADP(+).

Belongs to the glutamyl-tRNA reductase family. Homodimer.

The catalysed reaction is (S)-4-amino-5-oxopentanoate + tRNA(Glu) + NADP(+) = L-glutamyl-tRNA(Glu) + NADPH + H(+). It participates in porphyrin-containing compound metabolism; protoporphyrin-IX biosynthesis; 5-aminolevulinate from L-glutamyl-tRNA(Glu): step 1/2. Catalyzes the NADPH-dependent reduction of glutamyl-tRNA(Glu) to glutamate 1-semialdehyde (GSA). The chain is Glutamyl-tRNA reductase from Pseudomonas paraeruginosa (strain DSM 24068 / PA7) (Pseudomonas aeruginosa (strain PA7)).